The sequence spans 259 residues: MKIGMFDSGVGGLTVLKSVRKVYDKVDIVYLGDTARVPYGIKSKETIITYAKESANFLINQNVDVILIACNSVSANAMEALQEMFDIPIVGVIEAGVEAALKSSKTKHVGIIGTSATINSNKYQERLEAFNIKTYAKACPLFVPIVEEKLINTDISKKAVEFYLKEFKDLKDIDTLILGCTHYPLLEEDIKAFLPHINLVSSSDAIISYINNIVKNEGNATTELYFTDISQNTSELVEYIMGQKYDLKYVNVESLALNC.

Substrate is bound by residues 7–8 (DS) and 39–40 (YG). The active-site Proton donor/acceptor is cysteine 70. Position 71 to 72 (71 to 72 (NS)) interacts with substrate. The active-site Proton donor/acceptor is cysteine 180. 181-182 (TH) lines the substrate pocket.

Belongs to the aspartate/glutamate racemases family.

It carries out the reaction L-glutamate = D-glutamate. It functions in the pathway cell wall biogenesis; peptidoglycan biosynthesis. Provides the (R)-glutamate required for cell wall biosynthesis. This is Glutamate racemase from Hydrogenobaculum sp. (strain Y04AAS1).